The chain runs to 266 residues: Nitrate import ATP-binding protein NrtD (266 aa).

The ABC transporter domain maps to leucine 3 to tyrosine 234. Residue glycine 39–serine 46 participates in ATP binding.

This sequence belongs to the ABC transporter superfamily. Nitrate/nitrite/cyanate uptake transporter (NitT) (TC 3.A.1.16) family. In terms of assembly, the complex is composed of two ATP-binding proteins (NrtC and NrtD), two transmembrane proteins (NrtB) and a solute-binding protein (NrtA).

The protein resides in the cell inner membrane. It carries out the reaction nitrate(out) + ATP + H2O = nitrate(in) + ADP + phosphate + H(+). Part of the ABC transporter complex NrtABCD involved in nitrate uptake. The complex is probably also involved in nitrite transport. Probably responsible for energy coupling to the transport system. The sequence is that of Nitrate import ATP-binding protein NrtD (nrtD) from Synechocystis sp. (strain ATCC 27184 / PCC 6803 / Kazusa).